Here is a 369-residue protein sequence, read N- to C-terminus: Thyroid hormone receptor beta (369 aa).

The interval 1–14 (MSGYIPSYLDKDEL) is modulating. Residues cysteine 15, cysteine 18, cysteine 32, cysteine 35, cysteine 53, cysteine 59, cysteine 69, and cysteine 72 each contribute to the Zn(2+) site. NR C4-type zinc fingers lie at residues 15-35 (CVVC…CEGC) and 53-77 (CKYE…FKKC). The nuclear receptor DNA-binding region spans 15 to 89 (CVVCGDKATG…VGMATDLVLD (75 aa)). The NR LBD domain occupies 125-369 (EEWELIKIVT…PPLFLEVFED (245 aa)). The 3,3',5-triiodo-L-thyronine site is built by arginine 190, asparagine 239, and histidine 343. 3 residues coordinate L-thyroxine: arginine 190, asparagine 239, and histidine 343.

This sequence belongs to the nuclear hormone receptor family. NR1 subfamily.

It localises to the nucleus. Functionally, nuclear hormone receptor that can act as a repressor or activator of transcription. High affinity receptor for thyroid hormones, including triiodothyronine and thyroxine. The protein is Thyroid hormone receptor beta (THRB) of Cairina moschata (Muscovy duck).